The sequence spans 162 residues: Beta-carotene hydroxylase (162 aa).

Residues 8-135 enclose the Fatty acid hydroxylase domain; the sequence is VATVLVMELT…GRDHCVSFGF (128 aa).

This sequence belongs to the sterol desaturase family.

The enzyme catalyses all-trans-beta-carotene + 4 reduced [2Fe-2S]-[ferredoxin] + 2 O2 + 4 H(+) = all-trans-zeaxanthin + 4 oxidized [2Fe-2S]-[ferredoxin] + 2 H2O. It participates in carotenoid biosynthesis; astaxanthin biosynthesis. Functionally, catalyzes the hydroxylation reaction from beta-carotene to zeaxanthin via beta-cryptoxanthin. This is Beta-carotene hydroxylase (crtZ) from Paracoccus sp. (strain PC1) (Alcaligenes sp. (strain PC1)).